The chain runs to 284 residues: RAD52 motif-containing protein 1 (284 aa).

A necessary for nuclear localization and for nucleolar accumulation in response to heat shock region spans residues 1–92 (MAELVPFAVP…KQLFQKSPVK (92 aa)). Positions 15 to 98 (KTLLVWELSS…SPVKVRLGTR (84 aa)) constitute an RRM domain. Residues 90–133 (PVKVRLGTRHKAVQHQALALNSSKCQELANYYFGFNGCSKRIIK) form a necessary for nuclear and nucleolar localization region.

Homodimer. In terms of tissue distribution, expressed in testis.

It is found in the nucleus. Its subcellular location is the cytoplasm. The protein resides in the nucleolus. The protein localises to the PML body. It localises to the cajal body. In terms of biological role, may confer resistance to the antitumor agent cisplatin. Binds to DNA and RNA. The protein is RAD52 motif-containing protein 1 (RDM1) of Homo sapiens (Human).